Consider the following 933-residue polypeptide: MAATPQSLFPSGDDLDSSQLQMEPDEVDTLKEGEDPADRMHPFLAIYHLQPLKLHPLVFAPGVPVIAQVVGTERYTSGSKVGTCTLYSVRLTHGDFTWTTKKKFRHFQELHRDLLRHKVFMSLLPLARFAVASSPAPEGDSREIPSLPRAGPEGSSRRTASKQKYLENYLNRLLTMSFYRNYHAMTEFLEVSQLSFIPDLGCKGLEGVIRKRSGGHRVPGLTCCGRDQVCYRWSKRWLVVKDSFLLYMCLETGAISFVQLFDPGFKVQVGKRSTEARYGVRVDTSHRSLILKCSSYRQARWWAQEITELAQGPGRDFIQLHRHDSYAPPRPGTLARWFVNGAGYFAAVADAILRAQEEIFITDWWLSPEIYLKRPAHSDDWRLDIMLKKKAEEGVHVSVLLFKEVELALAINSGYSKKALMLLHPNIKVMRHPDQVTLWAHHEKLLVVDQVVAFLGGLDLAYGRWDDLHYRLTDLGDSSESAAPQPPTSCSDLPATPDLTHNQLFWLGKDYSNLITKDWVQLDRPFDDFIDRETMPRMPWRDIGVVVHGSPARDLARHFIQRWNFTKTTKTKYKIPIYPYLLPKSTSTANQLPFTLSGGQCATVQVLRSVDRWSAGTLENSILNAYLHTIRESQHFLYIENQFFISCSDGRTVLNKVGDEIVDRILKAHKQGQCFRVYVLLPLLPGFEGDISTGGGNSIQAILHFTYRTLCRGEYSILHRLKAAMGTEWRNYISVCGLRTHGELGGHPVSELIYIHSKMLIADDRTVIIGSANINDRSLLGKRDSELAVLIEDTEMEPSLMNGVEYQAGRFALSLRKHCFSVILGAAARPHLDLRDPVCDAFFQLWQDTAESNANIYEQIFRCLPSNATRSLRALREYVVVEPLATVSPPLARSELNQVQGHLVHFPLKFLEDEYLLPSLGSKEGVMPLEVWT.

2 disordered regions span residues 1–20 (MAAT…SSQL) and 134–160 (SPAP…RRTA). In terms of domain architecture, PX spans 65-195 (VIAQVVGTER…TEFLEVSQLS (131 aa)). The 109-residue stretch at 203 to 311 (KGLEGVIRKR…WAQEITELAQ (109 aa)) folds into the PH domain. 2 PLD phosphodiesterase domains span residues 437–464 (TLWA…AYGR) and 751–778 (ELIY…NDRS). The segment at 441 to 788 (HHEKLLVVDQ…LLGKRDSELA (348 aa)) is catalytic.

The protein belongs to the phospholipase D family. As to quaternary structure, interacts with PIP5K1B. Interacts with EGFR. Phosphorylated by FGR.

The protein resides in the cell membrane. It catalyses the reaction a 1,2-diacyl-sn-glycero-3-phosphocholine + H2O = a 1,2-diacyl-sn-glycero-3-phosphate + choline + H(+). The catalysed reaction is 1,2-dihexadecanoyl-sn-glycero-3-phosphocholine + H2O = 1,2-dihexadecanoyl-sn-glycero-3-phosphate + choline + H(+). In terms of biological role, function as phospholipase selective for phosphatidylcholine. May have a role in signal-induced cytoskeletal regulation and/or endocytosis. The sequence is that of Phospholipase D2 (PLD2) from Bos taurus (Bovine).